The sequence spans 230 residues: Phosphoribosylaminoimidazole-succinocarboxamide synthase (230 aa).

This sequence belongs to the SAICAR synthetase family.

It catalyses the reaction 5-amino-1-(5-phospho-D-ribosyl)imidazole-4-carboxylate + L-aspartate + ATP = (2S)-2-[5-amino-1-(5-phospho-beta-D-ribosyl)imidazole-4-carboxamido]succinate + ADP + phosphate + 2 H(+). The protein operates within purine metabolism; IMP biosynthesis via de novo pathway; 5-amino-1-(5-phospho-D-ribosyl)imidazole-4-carboxamide from 5-amino-1-(5-phospho-D-ribosyl)imidazole-4-carboxylate: step 1/2. The sequence is that of Phosphoribosylaminoimidazole-succinocarboxamide synthase from Thermotoga petrophila (strain ATCC BAA-488 / DSM 13995 / JCM 10881 / RKU-1).